A 710-amino-acid polypeptide reads, in one-letter code: Early transcription factor 82 kDa subunit (710 aa).

The protein belongs to the poxviridae VETF large subunit family. In terms of assembly, heterodimer of a 70 kDa and a 82 kDa subunit. Part of the early transcription complex composed of ETF, RAP94/OPG109, and the DNA-directed RNA polymerase.

It localises to the virion. Acts with RNA polymerase to initiate transcription from early gene promoters. Is recruited by the RPO-associated protein of 94 kDa RAP94/OPG109 to form the early transcription complex, which also contains the core RNA polymerase. ETF heterodimer binds to early gene promoters. The sequence is that of Early transcription factor 82 kDa subunit (OPG133) from Variola virus (isolate Human/India/Ind3/1967) (VARV).